Reading from the N-terminus, the 482-residue chain is Zinc metalloproteinase/disintegrin (482 aa).

Positions Met-1–Ser-20 are cleaved as a signal peptide. The propeptide occupies Met-21–Ala-189. Positions Arg-197–Pro-393 constitute a Peptidase M12B domain. Ca(2+) contacts are provided by Glu-200 and Asp-284. Intrachain disulfides connect Cys-308-Cys-388 and Cys-348-Cys-372. His-333 is a Zn(2+) binding site. Glu-334 is an active-site residue. Residues His-337 and His-343 each coordinate Zn(2+). Ca(2+)-binding residues include Cys-388 and Asn-391. A propeptide spanning residues Leu-394–Leu-409 is cleaved from the precursor. The 82-residue stretch at Thr-401–Ala-482 folds into the Disintegrin domain. Disulfide bonds link Cys-415–Cys-430, Cys-417–Cys-425, Cys-424–Cys-447, Cys-438–Cys-444, Cys-443–Cys-468, and Cys-456–Cys-475. The short motif at Arg-460–Asp-462 is the Cell attachment site element.

It belongs to the venom metalloproteinase (M12B) family. P-II subfamily. P-IId sub-subfamily. As to quaternary structure, homodimer; disulfide-linked (disintegrin). Zn(2+) serves as cofactor. Expressed by the venom gland.

The protein resides in the secreted. Functionally, this recombinant protein hydrolyzes fibronectin, but has no effect on type I gelatin and type I to V collagens. Selectively hydrolyzes the Aalpha-chain of fibrinogen (FGA), but has no effect on fibrin. Its function is as follows. Inhibits ADP-induced platelet aggregation. In terms of biological role, recombinant metalloproteinase-disintegrin Mt-d-I (393-408): hydrolyzes type I gelatin, type III and V collagens, but has no effect on type I, II, IV collagens and fibronectin. Selectively hydrolyzes the Aalpha-chain of fibrinogen, but has no effect on fibrin. May induce hemorrhage in vascular tissue. Strongly inhibits ADP-induced platelet aggregation. When concentrated, Mt-d-I undergoes autoproteolytic processing into metalloproteinase and disintegrin. This Gloydius brevicauda (Korean slamosa snake) protein is Zinc metalloproteinase/disintegrin.